A 413-amino-acid chain; its full sequence is Arginine biosynthesis bifunctional protein ArgJ (413 aa).

Positions 158, 184, 195, 285, 408, and 413 each coordinate substrate. T195 acts as the Nucleophile in catalysis.

This sequence belongs to the ArgJ family. Heterotetramer of two alpha and two beta chains.

The protein localises to the cytoplasm. The enzyme catalyses N(2)-acetyl-L-ornithine + L-glutamate = N-acetyl-L-glutamate + L-ornithine. The catalysed reaction is L-glutamate + acetyl-CoA = N-acetyl-L-glutamate + CoA + H(+). Its pathway is amino-acid biosynthesis; L-arginine biosynthesis; L-ornithine and N-acetyl-L-glutamate from L-glutamate and N(2)-acetyl-L-ornithine (cyclic): step 1/1. The protein operates within amino-acid biosynthesis; L-arginine biosynthesis; N(2)-acetyl-L-ornithine from L-glutamate: step 1/4. Its function is as follows. Catalyzes two activities which are involved in the cyclic version of arginine biosynthesis: the synthesis of N-acetylglutamate from glutamate and acetyl-CoA as the acetyl donor, and of ornithine by transacetylation between N(2)-acetylornithine and glutamate. The sequence is that of Arginine biosynthesis bifunctional protein ArgJ from Bradyrhizobium diazoefficiens (strain JCM 10833 / BCRC 13528 / IAM 13628 / NBRC 14792 / USDA 110).